The sequence spans 38 residues: Cytochrome b6-f complex subunit 5 (38 aa).

A helical membrane pass occupies residues 5 to 25 (LLLGIVLGLIPVTLAGLFVAA).

It belongs to the PetG family. In terms of assembly, the 4 large subunits of the cytochrome b6-f complex are cytochrome b6, subunit IV (17 kDa polypeptide, PetD), cytochrome f and the Rieske protein, while the 4 small subunits are PetG, PetL, PetM and PetN. The complex functions as a dimer.

The protein resides in the cellular thylakoid membrane. Functionally, component of the cytochrome b6-f complex, which mediates electron transfer between photosystem II (PSII) and photosystem I (PSI), cyclic electron flow around PSI, and state transitions. PetG is required for either the stability or assembly of the cytochrome b6-f complex. The protein is Cytochrome b6-f complex subunit 5 of Picosynechococcus sp. (strain ATCC 27264 / PCC 7002 / PR-6) (Agmenellum quadruplicatum).